The sequence spans 96 residues: Protein RnfH (96 aa).

The protein belongs to the UPF0125 (RnfH) family.

The sequence is that of Protein RnfH from Escherichia coli O139:H28 (strain E24377A / ETEC).